The chain runs to 162 residues: Putative ankyrin repeat protein R664 (162 aa).

ANK repeat units lie at residues 10-40 (KKLV…NVNY), 47-78 (NDTP…DVNY), and 82-111 (YHET…NPYL).

This Acanthamoeba polyphaga mimivirus (APMV) protein is Putative ankyrin repeat protein R664.